The chain runs to 186 residues: Elongation factor P (186 aa).

It belongs to the elongation factor P family.

The protein resides in the cytoplasm. It participates in protein biosynthesis; polypeptide chain elongation. Functionally, involved in peptide bond synthesis. Stimulates efficient translation and peptide-bond synthesis on native or reconstituted 70S ribosomes in vitro. Probably functions indirectly by altering the affinity of the ribosome for aminoacyl-tRNA, thus increasing their reactivity as acceptors for peptidyl transferase. In Shewanella denitrificans (strain OS217 / ATCC BAA-1090 / DSM 15013), this protein is Elongation factor P.